Reading from the N-terminus, the 357-residue chain is Cytoplasmic tRNA 2-thiolation protein 1 (357 aa).

Residues 314–348 (GVSRTRGRRGEKAGLHPDVGRGGGGGSSGPAEVAS) form a disordered region. The segment covering 321-332 (RRGEKAGLHPDV) has biased composition (basic and acidic residues).

The protein belongs to the TtcA family. CTU1/NCS6/ATPBD3 subfamily.

Its subcellular location is the cytoplasm. The protein operates within tRNA modification; 5-methoxycarbonylmethyl-2-thiouridine-tRNA biosynthesis. In terms of biological role, plays a central role in 2-thiolation of mcm(5)S(2)U at tRNA wobble positions of tRNA(Lys), tRNA(Glu) and tRNA(Gln). Directly binds tRNAs and probably acts by catalyzing adenylation of tRNAs, an intermediate required for 2-thiolation. It is unclear whether it acts as a sulfurtransferase that transfers sulfur from thiocarboxylated URM1 onto the uridine of tRNAs at wobble position. This chain is Cytoplasmic tRNA 2-thiolation protein 1, found in Chlamydomonas reinhardtii (Chlamydomonas smithii).